The chain runs to 1045 residues: V(D)J recombination-activating protein 1 (1045 aa).

Disordered stretches follow at residues 33–55 (ERRPSEEETEGSEVSYNSSQETY), 67–87 (LGSAPQSPTNFKPQQSEKSNV), and 222–253 (KRKSAPQLNPHKMKKRKRGPEFVKKSKTSSGN). Composition is skewed to polar residues over residues 44–55 (SEVSYNSSQETY) and 69–87 (SAPQSPTNFKPQQSEKSNV). 15 residues coordinate Zn(2+): Cys270, His274, Cys294, Cys297, His299, Cys309, His311, Cys314, Cys317, Cys329, Cys332, Cys359, Cys364, His376, and His380. The RING-type zinc-finger motif lies at 294–333 (CLVCEHILSDPVQTSCKHLFCRICILKYIKLMGCYCPSCK). The RAG1-type zinc-finger motif lies at 355–384 (LLLKCTVSGCDEEISLGKYSHHISKHKETK). Positions 395–462 (GGRPRQHLLT…QADELEAIME (68 aa)) form a DNA-binding region, NBD. Positions 606, 714, and 968 each coordinate a divalent metal cation.

The protein belongs to the RAG1 family. In terms of assembly, homodimer. Component of the RAG complex composed of core components rag1 and rag2. Requires Mg(2+) as cofactor. The cofactor is Mn(2+). Expressed within the thymus, liver and spleen in juvenile frogs, and within the thymus and bone marrow of adults.

It is found in the nucleus. It catalyses the reaction S-ubiquitinyl-[E2 ubiquitin-conjugating enzyme]-L-cysteine + [acceptor protein]-L-lysine = [E2 ubiquitin-conjugating enzyme]-L-cysteine + N(6)-ubiquitinyl-[acceptor protein]-L-lysine.. Its function is as follows. Catalytic component of the RAG complex, a multiprotein complex that mediates the DNA cleavage phase during V(D)J recombination. V(D)J recombination assembles a diverse repertoire of immunoglobulin and T-cell receptor genes in developing B and T lymphocytes through rearrangement of different V (variable), in some cases D (diversity), and J (joining) gene segments. In the RAG complex, RAG1 mediates the DNA-binding to the conserved recombination signal sequences (RSS) and catalyzes the DNA cleavage activities by introducing a double-strand break between the RSS and the adjacent coding segment. RAG2 is not a catalytic component but is required for all known catalytic activities. DNA cleavage occurs in 2 steps: a first nick is introduced in the top strand immediately upstream of the heptamer, generating a 3'-hydroxyl group that can attack the phosphodiester bond on the opposite strand in a direct transesterification reaction, thereby creating 4 DNA ends: 2 hairpin coding ends and 2 blunt, 5'-phosphorylated ends. In addition to its endonuclease activity, RAG1 also acts as an E3 ubiquitin-protein ligase that mediates monoubiquitination of histone H3. Histone H3 monoubiquitination is required for the joining step of V(D)J recombination. The chain is V(D)J recombination-activating protein 1 (rag1) from Xenopus laevis (African clawed frog).